Reading from the N-terminus, the 363-residue chain is Phosphoserine aminotransferase (363 aa).

An L-glutamate-binding site is contributed by arginine 42. Residues glycine 76–arginine 77, tryptophan 102, threonine 156, aspartate 175, and glutamine 198 contribute to the pyridoxal 5'-phosphate site. Lysine 199 bears the N6-(pyridoxal phosphate)lysine mark. Position 240–241 (asparagine 240–threonine 241) interacts with pyridoxal 5'-phosphate.

It belongs to the class-V pyridoxal-phosphate-dependent aminotransferase family. SerC subfamily. In terms of assembly, homodimer. It depends on pyridoxal 5'-phosphate as a cofactor.

The protein resides in the cytoplasm. The catalysed reaction is O-phospho-L-serine + 2-oxoglutarate = 3-phosphooxypyruvate + L-glutamate. It catalyses the reaction 4-(phosphooxy)-L-threonine + 2-oxoglutarate = (R)-3-hydroxy-2-oxo-4-phosphooxybutanoate + L-glutamate. Its pathway is amino-acid biosynthesis; L-serine biosynthesis; L-serine from 3-phospho-D-glycerate: step 2/3. It participates in cofactor biosynthesis; pyridoxine 5'-phosphate biosynthesis; pyridoxine 5'-phosphate from D-erythrose 4-phosphate: step 3/5. Functionally, catalyzes the reversible conversion of 3-phosphohydroxypyruvate to phosphoserine and of 3-hydroxy-2-oxo-4-phosphonooxybutanoate to phosphohydroxythreonine. The sequence is that of Phosphoserine aminotransferase from Shewanella frigidimarina (strain NCIMB 400).